The following is a 477-amino-acid chain: PEP-dependent dihydroxyacetone kinase, phosphoryl donor subunit DhaM (477 aa).

The PTS EIIA type-4 domain occupies 1 to 135; it reads MIGLIIVSHS…QALQAKQQQL (135 aa). The active-site Tele-phosphohistidine intermediate is His-9. In terms of domain architecture, HPr spans 156–243; it reads ALTTQWVVKN…QLAQHNFGDN (88 aa). Catalysis depends on His-170, which acts as the Pros-phosphohistidine intermediate. The PTS EI-like, N-terminal part stretch occupies residues 269 to 477; sequence HAPNTELCIS…IETRSLIVAS (209 aa). Catalysis depends on His-435, which acts as the Tele-phosphohistidine intermediate.

The protein belongs to the PEP-utilizing enzyme family. As to quaternary structure, homodimer. The dihydroxyacetone kinase complex is composed of a homodimer of DhaM, a homodimer of DhaK and the subunit DhaL.

The catalysed reaction is dihydroxyacetone + phosphoenolpyruvate = dihydroxyacetone phosphate + pyruvate. Functionally, component of the dihydroxyacetone kinase complex, which is responsible for the phosphoenolpyruvate (PEP)-dependent phosphorylation of dihydroxyacetone. DhaM serves as the phosphoryl donor. Is phosphorylated by phosphoenolpyruvate in an EI- and HPr-dependent reaction, and a phosphorelay system on histidine residues finally leads to phosphoryl transfer to DhaL and dihydroxyacetone. This is PEP-dependent dihydroxyacetone kinase, phosphoryl donor subunit DhaM from Providencia stuartii (strain MRSN 2154).